Here is a 1293-residue protein sequence, read N- to C-terminus: Phosphoribosylformylglycinamidine synthase (1293 aa).

Residues 305 to 316, 384 to 386, and Ala-676 contribute to the ATP site; these read GAATGSGGEIRD and TGY. The interval 307-326 is disordered; that stretch reads ATGSGGEIRDEGATGRGSKP. Mg(2+)-binding residues include Asp-677, Glu-716, Asn-720, and Asp-884. An ATP-binding site is contributed by Ser-886. The region spanning 1040–1293 is the Glutamine amidotransferase type-1 domain; sequence MAILREQGVN…MFRNARVKIG (254 aa). The active-site Nucleophile is Cys-1133. Active-site residues include His-1258 and Glu-1260.

In the N-terminal section; belongs to the FGAMS family. In terms of assembly, monomer.

Its subcellular location is the cytoplasm. The enzyme catalyses N(2)-formyl-N(1)-(5-phospho-beta-D-ribosyl)glycinamide + L-glutamine + ATP + H2O = 2-formamido-N(1)-(5-O-phospho-beta-D-ribosyl)acetamidine + L-glutamate + ADP + phosphate + H(+). The protein operates within purine metabolism; IMP biosynthesis via de novo pathway; 5-amino-1-(5-phospho-D-ribosyl)imidazole from N(2)-formyl-N(1)-(5-phospho-D-ribosyl)glycinamide: step 1/2. Functionally, phosphoribosylformylglycinamidine synthase involved in the purines biosynthetic pathway. Catalyzes the ATP-dependent conversion of formylglycinamide ribonucleotide (FGAR) and glutamine to yield formylglycinamidine ribonucleotide (FGAM) and glutamate. The polypeptide is Phosphoribosylformylglycinamidine synthase (Shewanella frigidimarina (strain NCIMB 400)).